The following is a 212-amino-acid chain: 3-demethoxyubiquinol 3-hydroxylase (212 aa).

The tract at residues 21 to 42 is disordered; the sequence is SRMSRPLPVPQESAVTEAAPEL. Residues Glu-61, Glu-91, His-94, Glu-143, Glu-175, and His-178 each coordinate Fe cation.

The protein belongs to the COQ7 family. It depends on Fe cation as a cofactor.

The protein resides in the cell membrane. The catalysed reaction is a 5-methoxy-2-methyl-3-(all-trans-polyprenyl)benzene-1,4-diol + AH2 + O2 = a 3-demethylubiquinol + A + H2O. It participates in cofactor biosynthesis; ubiquinone biosynthesis. In terms of biological role, catalyzes the hydroxylation of 2-nonaprenyl-3-methyl-6-methoxy-1,4-benzoquinol during ubiquinone biosynthesis. This is 3-demethoxyubiquinol 3-hydroxylase from Paraburkholderia xenovorans (strain LB400).